The following is a 133-amino-acid chain: Large ribosomal subunit protein uL15 (133 aa).

The segment at 1 to 62 is disordered; that stretch reads MALHNLQPAP…GQQPLQRRLP (62 aa). Positions 32-45 are enriched in polar residues; that stretch reads TRGQKGQKSRTGYS.

The protein belongs to the universal ribosomal protein uL15 family. In terms of assembly, part of the 50S ribosomal subunit.

Its function is as follows. Binds to the 23S rRNA. This chain is Large ribosomal subunit protein uL15, found in Nitratiruptor sp. (strain SB155-2).